A 549-amino-acid chain; its full sequence is Beta-mannosyltransferase 3 (549 aa).

Topologically, residues 1 to 37 (MFESDLSFYSALLILCCPISIVFFKKFPIKGYTGANK) are cytoplasmic. A helical transmembrane segment spans residues 38–58 (VSLFLQCLIAILNLNILYSFI). Residues 59–549 (NSLTITLGHD…DTMGWDKLSR (491 aa)) are Extracellular-facing.

This sequence belongs to the BMT family.

The protein resides in the membrane. In terms of biological role, beta-mannosyltransferase involved in cell wall biosynthesis. Required for addition of the second beta-mannose residue to acid-stable fraction of cell wall phosphopeptidomannan, and in elongation of beta-mannose chains on the phosphopeptidomannan acid-labile fraction. This Candida albicans (strain SC5314 / ATCC MYA-2876) (Yeast) protein is Beta-mannosyltransferase 3 (BMT3).